We begin with the raw amino-acid sequence, 397 residues long: MSKIIAINAGSSSLKFQLFEMPSETVLTKGLVERIGLEDSIFTITVDGEKQKEITNIPDHAVAVNMLLKKLTENGIVKSLDEIGGIGHRVVHGGEKFADSVLITDEVLADIEELSDLAPLHNPANVVGIKAFQEVLPNVPAVAVFDTAFHQTMPESAFLYSLPYEYYEKFGIRKYGFHGTSHKYVTERAAELLGRPLESLSLLSCHLGNGASIAAVEGGKSIDTSMGFTPLAGVTMGTRSGNIDPALIPYIMEKTGQTVEEVVNVLNKKSGMLGLTGYSSDLRDIIAKEEEGDHRAKVALDVFVSRIHKYIGSYTARMKGVDAIIFTAGVGENSAIIRERVLEGLEYMGVYFDAKRNNVFGEEAFINFPHSPVKIIVIPTDEEVMIARDVLRLGNIG.

Residue Asn-8 participates in Mg(2+) binding. Lys-15 provides a ligand contact to ATP. Arg-89 is a substrate binding site. The active-site Proton donor/acceptor is the Asp-146. ATP is bound by residues 206 to 210 (HLGNG), 281 to 283 (DLR), and 329 to 333 (GVGEN). Residue Glu-382 coordinates Mg(2+).

This sequence belongs to the acetokinase family. In terms of assembly, homodimer. Mg(2+) is required as a cofactor. The cofactor is Mn(2+).

It localises to the cytoplasm. It carries out the reaction acetate + ATP = acetyl phosphate + ADP. Its pathway is metabolic intermediate biosynthesis; acetyl-CoA biosynthesis; acetyl-CoA from acetate: step 1/2. In terms of biological role, catalyzes the formation of acetyl phosphate from acetate and ATP. Can also catalyze the reverse reaction. This Bacillus cereus (strain ATCC 10987 / NRS 248) protein is Acetate kinase.